Reading from the N-terminus, the 58-residue chain is Small ribosomal subunit protein bS21B (58 aa).

It belongs to the bacterial ribosomal protein bS21 family.

This Nostoc sp. (strain PCC 7120 / SAG 25.82 / UTEX 2576) protein is Small ribosomal subunit protein bS21B (rpsU2).